A 277-amino-acid chain; its full sequence is F41 fimbrial protein (277 aa).

Positions 1–22 are cleaved as a signal peptide; it reads MKKTLIALAVAASAAVSGSVMA.

The protein belongs to the fimbrial K88 protein family.

The protein localises to the fimbrium. In terms of biological role, fimbriae (also called pili), polar filaments radiating from the surface of the bacterium to a length of 0.5-1.5 micrometers and numbering 100-300 per cell, enable bacteria to colonize the epithelium of specific host organs. This chain is F41 fimbrial protein (FimF41a), found in Escherichia coli.